The following is a 269-amino-acid chain: Oligoribonuclease, mitochondrial (269 aa).

Residues 55–227 (LVWIDCEMTG…SDIKESIAQL (173 aa)) enclose the Exonuclease domain. Tyrosine 184 is a catalytic residue. The tract at residues 240 to 269 (ETESVESIGSEQPESPSSSTSSLKRQRTDF) is disordered. Residues 245-261 (ESIGSEQPESPSSSTSS) are compositionally biased toward low complexity.

It belongs to the oligoribonuclease family.

It is found in the mitochondrion. In terms of biological role, 3'-to-5' exoribonuclease specific for small oligoribonucleotides. This chain is Oligoribonuclease, mitochondrial (REX2), found in Saccharomyces cerevisiae (strain ATCC 204508 / S288c) (Baker's yeast).